We begin with the raw amino-acid sequence, 323 residues long: Phosphoribosylaminoimidazole-succinocarboxamide synthase (323 aa).

It belongs to the SAICAR synthetase family.

The catalysed reaction is 5-amino-1-(5-phospho-D-ribosyl)imidazole-4-carboxylate + L-aspartate + ATP = (2S)-2-[5-amino-1-(5-phospho-beta-D-ribosyl)imidazole-4-carboxamido]succinate + ADP + phosphate + 2 H(+). It functions in the pathway purine metabolism; IMP biosynthesis via de novo pathway; 5-amino-1-(5-phospho-D-ribosyl)imidazole-4-carboxamide from 5-amino-1-(5-phospho-D-ribosyl)imidazole-4-carboxylate: step 1/2. This chain is Phosphoribosylaminoimidazole-succinocarboxamide synthase, found in Azobacteroides pseudotrichonymphae genomovar. CFP2.